Consider the following 191-residue polypeptide: uncharacterized protein (191 aa).

This is an uncharacterized protein from Acanthamoeba polyphaga (Amoeba).